The sequence spans 172 residues: 3-hydroxydecanoyl-[acyl-carrier-protein] dehydratase (172 aa).

Histidine 71 is a catalytic residue.

This sequence belongs to the thioester dehydratase family. FabA subfamily. Homodimer.

It is found in the cytoplasm. The catalysed reaction is a (3R)-hydroxyacyl-[ACP] = a (2E)-enoyl-[ACP] + H2O. The enzyme catalyses (3R)-hydroxydecanoyl-[ACP] = (2E)-decenoyl-[ACP] + H2O. It carries out the reaction (2E)-decenoyl-[ACP] = (3Z)-decenoyl-[ACP]. The protein operates within lipid metabolism; fatty acid biosynthesis. In terms of biological role, necessary for the introduction of cis unsaturation into fatty acids. Catalyzes the dehydration of (3R)-3-hydroxydecanoyl-ACP to E-(2)-decenoyl-ACP and then its isomerization to Z-(3)-decenoyl-ACP. Can catalyze the dehydratase reaction for beta-hydroxyacyl-ACPs with saturated chain lengths up to 16:0, being most active on intermediate chain length. This chain is 3-hydroxydecanoyl-[acyl-carrier-protein] dehydratase, found in Escherichia coli (strain SE11).